The following is a 92-amino-acid chain: Protein S100-A5 (92 aa).

2 consecutive EF-hand domains span residues 12-47 (MVTT…LGEM) and 47-82 (MKES…LCMA). Positions 28, 33, 60, 62, 64, 66, and 71 each coordinate Ca(2+).

This sequence belongs to the S-100 family. As to quaternary structure, homodimer.

Functionally, binds calcium, zinc and copper. One subunit can simultaneously bind 2 calcium ions or 2 copper ions plus 1 zinc ion. Calcium and copper ions compete for the same binding sites. This chain is Protein S100-A5 (S100A5), found in Homo sapiens (Human).